The chain runs to 352 residues: N-acetyl-gamma-glutamyl-phosphate reductase (352 aa).

Cys-155 is an active-site residue.

It belongs to the NAGSA dehydrogenase family. Type 1 subfamily.

Its subcellular location is the cytoplasm. The catalysed reaction is N-acetyl-L-glutamate 5-semialdehyde + phosphate + NADP(+) = N-acetyl-L-glutamyl 5-phosphate + NADPH + H(+). It functions in the pathway amino-acid biosynthesis; L-arginine biosynthesis; N(2)-acetyl-L-ornithine from L-glutamate: step 3/4. Functionally, catalyzes the NADPH-dependent reduction of N-acetyl-5-glutamyl phosphate to yield N-acetyl-L-glutamate 5-semialdehyde. This Gloeothece citriformis (strain PCC 7424) (Cyanothece sp. (strain PCC 7424)) protein is N-acetyl-gamma-glutamyl-phosphate reductase.